The sequence spans 376 residues: MTVSKFVQIRRDLHRIPEIGFKEWKTQQYILDYIGTLSHEFVEVKTWKTGVIVKVNGKNPEKIIGYRADIDGLPITEETGYEFASIHEGMMHACGHDVHTTIGLGLLTKAVSERIDDDLVFLFQPAEEGPGGALPMLESEELKEWKPNIILGLHIAPEYAVGTIATKEGLLFANTSELYIDLKGKGGHAAYPHTANDMIVAASHLVTQLQSVISRNVNPLDSAVITIGKITGGTVQNIIAEKSRLEGTIRTLSVESMKRVKSRIESIVAGIEASFQCEAIIDYGAMYHQVYNHEELTREFMEFVHKQTDMNVITCTEAMTGEDFGYMLREIPGFMFWLGVNSEYGLHHAKLKPDEEVIEKAITFLSQYVKWKGNRK.

The active site involves Asp-69. Glu-128 acts as the Proton acceptor in catalysis.

The protein belongs to the peptidase M20A family. N-acetyldiaminopimelate deacetylase subfamily.

It carries out the reaction N-acetyl-(2S,6S)-2,6-diaminopimelate + H2O = (2S,6S)-2,6-diaminopimelate + acetate. It functions in the pathway amino-acid biosynthesis; L-lysine biosynthesis via DAP pathway; LL-2,6-diaminopimelate from (S)-tetrahydrodipicolinate (acetylase route): step 3/3. Its function is as follows. Catalyzes the conversion of N-acetyl-diaminopimelate to diaminopimelate and acetate. The sequence is that of N-acetyldiaminopimelate deacetylase from Bacillus cereus (strain B4264).